A 351-amino-acid chain; its full sequence is Probable sugar phosphate/phosphate translocator At5g11230 (351 aa).

Transmembrane regions (helical) follow at residues 15-35 (IVLS…VIVY), 49-69 (FPIS…FLII), 89-109 (VVPI…AYIY), 113-133 (SFIQ…GVLF), 141-161 (DTMM…YGEA), 165-185 (VWGV…LVLI), 205-225 (VAPC…FPVL), 236-256 (AIFG…FLLV), 263-283 (TMNV…WSVI), and 286-306 (TVTP…AYYN). The EamA domain occupies 38 to 156 (YILDKKMYNW…LSISFGVAIA (119 aa)). Positions 321–351 (KKIQQADEESGRLLEEREGDVEGKKNDQSGN) are disordered.

Belongs to the TPT transporter family. TPT (TC 2.A.7.9) subfamily.

It is found in the membrane. The sequence is that of Probable sugar phosphate/phosphate translocator At5g11230 from Arabidopsis thaliana (Mouse-ear cress).